The sequence spans 1181 residues: C5a peptidase (1181 aa).

Positions 1-31 are cleaved as a signal peptide; that stretch reads MRKKQKLPFDKLAIALMSTSILLNAQSDIKA. Polar residues predominate over residues 33-52; it reads TVTEDTPATEQAVETPQPTA. Residues 33–117 form a disordered region; that stretch reads TVTEDTPATE…PSQVKTLQEK (85 aa). Positions 70-81 are enriched in acidic residues; the sequence is DDAEETIADDAN. Residues 99 to 581 enclose the Peptidase S8 domain; sequence KATIRDLNDP…AGAVDAKKAS (483 aa). Residues aspartate 130, histidine 193, and serine 512 each act as charge relay system in the active site. Composition is skewed to basic and acidic residues over residues 1029 to 1054, 1061 to 1071, 1078 to 1088, and 1095 to 1107; these read EGHS…KPEQ, PDKKPETKPEQ, and PDKK…EKDS. Positions 1029–1150 are disordered; it reads EGHSNKPEQD…KDQLPTTNDK (122 aa). Repeat copies occupy residues 1034–1050, 1051–1067, 1068–1084, 1085–1101, and 1102–1118. The interval 1034 to 1118 is 5 X 17 AA tandem repeats; the sequence is KPEQDGSDQA…GQTPGKTPQK (85 aa). 2 stretches are compositionally biased toward polar residues: residues 1109–1123 and 1137–1147; these read GQTP…QPSR and KASTKDQLPTT. Positions 1144 to 1148 match the LPXTG sorting signal motif; the sequence is LPTTN. The residue at position 1147 (threonine 1147) is a Pentaglycyl murein peptidoglycan amidated threonine. Positions 1148 to 1181 are cleaved as a propeptide — removed by sortase; sequence NDKDTNRLHLLKLVMTTFFLGLVAHIFKTKRTED.

The protein belongs to the peptidase S8 family. In terms of processing, cleaved by SpeB protease; leading to its degradation. Degradation by SpeB is probably strictly regulated to preserve integrity of C5a peptidase.

It localises to the secreted. The protein localises to the cell wall. It carries out the reaction The primary cleavage site is at 67-His-|-Lys-68 in human C5a with a minor secondary cleavage site at 58-Ala-|-Ser-59.. Functionally, this virulence factor of S.pyogenes specifically cleaves the human serum chemotaxin C5a at '68-Lys-|-Asp-69' bond near its C-terminus, destroying its ability to serve as a chemoattractant. The sequence is that of C5a peptidase (scpA) from Streptococcus pyogenes serotype M1.